A 65-amino-acid polypeptide reads, in one-letter code: Large ribosomal subunit protein bL32 (65 aa).

Over residues 1 to 19 (MAIVPKRKTSKQRKHKRQS) the composition is skewed to basic residues. Positions 1–21 (MAIVPKRKTSKQRKHKRQSHS) are disordered.

Belongs to the bacterial ribosomal protein bL32 family.

This chain is Large ribosomal subunit protein bL32, found in Mesomycoplasma hyopneumoniae (strain 7448) (Mycoplasma hyopneumoniae).